Reading from the N-terminus, the 569-residue chain is MGKKLDLSKLTDDEAKHIWEVVQRDFDLRRKEEERLGGLKDRIKKESSQRELLSDAAHLNETHCARCLQPYRLLVAPKRQCLDCHLFTCQDCSHAHPEEEGWLCDPCHLARVVKMGSLEWYYGHLRARFKRFGSAKVIRSLCGRLQGGGGPEPSPGEGSGDSEQTEEDGELDTVAQAQPLGSKKKRLSIHGLDFDADSDGSTQSSGHPPYLSPVPMATDSLQTLTGEPRAKDTSQEAVVLEEADVGAPGCHPHPEEQTDSLSAARQDTLTEPRFPRQSCTTALGLAVTPGPGVISSSERLSSRYPADEGTSDDEDTGADGVASQSLTWRDCAPAESQHLTGHQPTDADREEETLKRKLEEMTSHISDQGASSEEEGSKEEEAGLNRKTSIEDLPGAAPEVLVASGQTSRQETSPRGPQELMQPGRTTDQELLELEDRVAVTASEVQQVESEVSNIKSKIAALQAAGLSVRPSGKPQRRSNLPIFLPRLVGRLGQTPKDPNAEPSDEVKVMTAPYLLRRKFSNPPKSQDKAGDSFDRQSAYRGSLTQRNPNSRKGVANHSFAKPVMTQRP.

Residues lysine 4 to histidine 124 enclose the RabBD domain. Residues histidine 58 to valine 112 form an FYVE-type zinc finger. The segment at glycine 143–glutamate 430 is disordered. Composition is skewed to basic and acidic residues over residues glutamate 352–threonine 362 and glutamate 379–isoleucine 390. A compositionally biased stretch (polar residues) spans serine 404 to arginine 415. The stretch at leucine 431–alanine 465 forms a coiled coil. A disordered region spans residues glycine 490 to proline 569. Residues serine 526–aspartate 535 are compositionally biased toward basic and acidic residues.

In terms of assembly, binds RAB27A that has been activated by GTP-binding via its N-terminus. Binds MYO5A via its C-terminal coiled coil domain.

The protein localises to the melanosome. Its function is as follows. Rab effector protein involved in melanosome transport. Serves as link between melanosome-bound RAB27A and the motor protein MYO5A. In Felis catus (Cat), this protein is Melanophilin (MLPH).